Here is a 1756-residue protein sequence, read N- to C-terminus: Periplakin (1756 aa).

Ser14 is subject to Phosphoserine. Coiled coils occupy residues 16–125 (TVQT…KQIY) and 188–389 (KEQN…QQVV). Spectrin repeat units follow at residues 216-317 (QDYM…SHLK), 323-485 (HQFH…RTLQ), 505-612 (RQLL…EKVD), and 733-861 (EHFH…QNLE). One can recognise an SH3 domain in the interval 399-455 (LKPIPVEALCDFEGEQGLISRGYSYTLQKNNGESWELMDSAGNKLIAPAVCFVIPPT). Ser465 is modified (phosphoserine). 2 coiled-coil regions span residues 585 to 820 (LLRT…GRRS) and 886 to 1645 (DSGV…SVAV). Phosphoserine occurs at positions 887, 949, 1584, and 1657. Residues 1557–1756 (ELDFLREENH…ELAVLVSGQK (200 aa)) are interacts with BFSP2 and VIM. Plectin repeat units follow at residues 1651–1685 (ENHL…WNMF) and 1700–1735 (VKGP…PAQY).

Belongs to the plakin or cytolinker family. In terms of assembly, homodimer or a heterodimer with EVPL. Found in a complex composed of PPL (via C-terminal linker domain), BFSP1 and BFSP2 in the retinal lens. Within the complex interacts (via C-terminal linker domain) with BFSP2. Interacts with VIM. Binds to the PH domain of AKT1. Interacts with FCGR1A. May interact with PPHLN1. As to expression, expressed in stratified squamous epithelia and in some other epithelia.

It localises to the cell junction. It is found in the desmosome. The protein resides in the cytoplasm. The protein localises to the cytoskeleton. Its subcellular location is the cell membrane. Functionally, component of the cornified envelope of keratinocytes. May link the cornified envelope to desmosomes and intermediate filaments. May act as a localization signal in PKB/AKT-mediated signaling. This chain is Periplakin (PPL), found in Homo sapiens (Human).